The primary structure comprises 483 residues: Glycogen synthase kinase-3 alpha (483 aa).

The span at 1-15 (MSGGGPSGGGPGGSG) shows a compositional bias: gly residues. The segment at 1–96 (MSGGGPSGGG…PPPGVKLGRD (96 aa)) is disordered. Ser-2 is modified (N-acetylserine). Position 2 is a phosphoserine (Ser-2). Ser-21 carries the post-translational modification Phosphoserine; by PKB/AKT1. A compositionally biased stretch (gly residues) spans 25–82 (PGGGGGGGGGGPGGSASGPGGTGGGKASVGAMGGGVGASSSGGGPSGSGGGGSGGPGA). 3 positions are modified to phosphoserine: Ser-72, Ser-77, and Ser-97. The region spanning 119-403 (YTDIKVIGNG…PLEACAHSFF (285 aa)) is the Protein kinase domain. Residues 125 to 133 (IGNGSFGVV) and Lys-148 contribute to the ATP site. The active-site Proton acceptor is Asp-244. Tyr-279 is modified (phosphotyrosine). The disordered stretch occupies residues 443-483 (PHLRSPSGPATLTSSSQALTETQTGQDWQAPDATPTLTNSS). The span at 450 to 469 (GPATLTSSSQALTETQTGQD) shows a compositional bias: polar residues.

Belongs to the protein kinase superfamily. CMGC Ser/Thr protein kinase family. GSK-3 subfamily. Monomer. Interacts with ARRB2, AXIN1 and CTNNB1/beta-catenin. Interacts with CTNND2. Interacts with LMBR1L. Interacts with DDX3X. Interacts with TNFRSF10B. In terms of processing, phosphorylated by AKT1 at Ser-21: upon insulin-mediated signaling, the activated PKB/AKT1 protein kinase phosphorylates and deactivates GSK3A, resulting in the dephosphorylation and activation of GYS1. Activated by phosphorylation at Tyr-279.

It catalyses the reaction L-seryl-[tau protein] + ATP = O-phospho-L-seryl-[tau protein] + ADP + H(+). The catalysed reaction is L-threonyl-[tau protein] + ATP = O-phospho-L-threonyl-[tau protein] + ADP + H(+). It carries out the reaction L-seryl-[protein] + ATP = O-phospho-L-seryl-[protein] + ADP + H(+). The enzyme catalyses L-threonyl-[protein] + ATP = O-phospho-L-threonyl-[protein] + ADP + H(+). Activated by phosphorylation at Tyr-279. In response to insulin, inhibited by phosphorylation at Ser-21 by PKB/AKT1; phosphorylation at this site causes a conformational change, preventing access of substrates to the active site. Inhibited by lithium. In terms of biological role, constitutively active protein kinase that acts as a negative regulator in the hormonal control of glucose homeostasis, Wnt signaling and regulation of transcription factors and microtubules, by phosphorylating and inactivating glycogen synthase (GYS1 or GYS2), CTNNB1/beta-catenin, APC and AXIN1. Requires primed phosphorylation of the majority of its substrates. Contributes to insulin regulation of glycogen synthesis by phosphorylating and inhibiting GYS1 activity and hence glycogen synthesis. Regulates glycogen metabolism in liver, but not in muscle. May also mediate the development of insulin resistance by regulating activation of transcription factors. In Wnt signaling, regulates the level and transcriptional activity of nuclear CTNNB1/beta-catenin. Facilitates amyloid precursor protein (APP) processing and the generation of APP-derived amyloid plaques found in Alzheimer disease. May be involved in the regulation of replication in pancreatic beta-cells. Is necessary for the establishment of neuronal polarity and axon outgrowth. Through phosphorylation of the anti-apoptotic protein MCL1, may control cell apoptosis in response to growth factors deprivation. Acts as a regulator of autophagy by mediating phosphorylation of KAT5/TIP60 under starvation conditions, activating KAT5/TIP60 acetyltransferase activity and promoting acetylation of key autophagy regulators, such as ULK1 and RUBCNL/Pacer. Negatively regulates extrinsic apoptotic signaling pathway via death domain receptors. Promotes the formation of an anti-apoptotic complex, made of DDX3X, BRIC2 and GSK3B, at death receptors, including TNFRSF10B. The anti-apoptotic function is most effective with weak apoptotic signals and can be overcome by stronger stimulation. In Rattus norvegicus (Rat), this protein is Glycogen synthase kinase-3 alpha (Gsk3a).